Here is a 342-residue protein sequence, read N- to C-terminus: Aristolochene synthase (342 aa).

Residues Asp-115, Asn-244, Ser-248, and Glu-252 each coordinate Mg(2+). (2E,6E)-farnesyl diphosphate is bound by residues Arg-340 and Tyr-341.

Belongs to the terpene synthase family. As to quaternary structure, homodimer. Mg(2+) is required as a cofactor.

The enzyme catalyses (2E,6E)-farnesyl diphosphate = (+)-aristolochene + diphosphate. The protein operates within sesquiterpene biosynthesis; aristolochene biosynthesis; aristolochene from farnesyl diphosphate: step 1/1. In terms of biological role, aristolochene synthase; part of the gene cluster that mediates the biosynthesis of PR-toxin, a bicyclic sesquiterpene belonging to the eremophilane class and acting as a mycotoxin. The first step of the pathway is catalyzed by the aristolochene synthase which performs the cyclization of trans,trans-farnesyl diphosphate (FPP) to the bicyclic sesquiterpene aristolochene. Following the formation of aristolochene, the non-oxygenated aristolochene is converted to the trioxygenated intermediate eremofortin B, via 7-epi-neopetasone. This conversion appears to involve three enzymes, a hydroxysterol oxidase-like enzyme, the quinone-oxidase prx3 that forms the quinone-type-structure in the bicyclic nucleus of aristolochene with the C8-oxo group and the C-3 hydroxyl group, and the P450 monooxygenase ORF6 that introduces the epoxide at the double bond between carbons 1 and 2. No monoxy or dioxy-intermediates have been reported to be released to the broth, so these three early oxidative reactions may be coupled together. Eremofortin B is further oxidized by another P450 monooxygenase, that introduces a second epoxide between carbons 7 and 11 prior to acetylation to eremofortin A by the acetyltransferase ORF8. The second epoxidation may be performed by a second P450 monooxygenase. After the acetylation step, eremofortin A is converted to eremofortin C and then to PR-toxin. First the conversion of eremofortin A to eremofortin C proceeds by oxidation of the side chain of the molecule at C-12 and is catalyzed by the short-chain oxidoreductase prx1. The cytochrome P450 monooxygenase ORF5 also plays a role in this step. The primary alcohol formed at C-12 is finally oxidized by the short-chain alcohol dehydrogenase prx4 that forms PR-toxin. In Penicillium roqueforti (strain FM164), this protein is Aristolochene synthase.